The sequence spans 303 residues: Elongation factor Ts (303 aa).

Residues 81–84 (TDFV) are involved in Mg(2+) ion dislocation from EF-Tu.

The protein belongs to the EF-Ts family.

Its subcellular location is the cytoplasm. Functionally, associates with the EF-Tu.GDP complex and induces the exchange of GDP to GTP. It remains bound to the aminoacyl-tRNA.EF-Tu.GTP complex up to the GTP hydrolysis stage on the ribosome. The chain is Elongation factor Ts from Mesomycoplasma hyopneumoniae (strain 232) (Mycoplasma hyopneumoniae).